The following is a 383-amino-acid chain: 6-hydroxynicotinate 3-monooxygenase (383 aa).

The N-terminal stretch at 1–26 is a signal peptide; sequence MQGKPRIAVIGAGLGGTAGAALMARA. FAD-binding positions include Gly15, 34-35, His47, Arg108, and Leu130; that span reads EQ. The Proton acceptor role is filled by His47. The active-site Proton acceptor is the Tyr214. FAD-binding positions include Asp293 and 306–307; that span reads AA.

Belongs to the 6-hydroxynicotinate 3-monooxygenase family. As to quaternary structure, monomer. FAD serves as cofactor.

It catalyses the reaction 6-hydroxynicotinate + NADH + O2 + 2 H(+) = 2,5-dihydroxypyridine + CO2 + NAD(+) + H2O. Its pathway is cofactor degradation; nicotinate degradation. Competitively inhibited by 6-hydroxynicotinaldehyde. Its function is as follows. Flavin-dependent monooxygenase (FMO) that catalyzes the decarboxylative hydroxylation of 6-hydroxynicotinic acid (6-HNA) to 2,5-dihydroxypyridine (2,5-DHP) with concomitant oxidation of NADH, a step in the aerobic nicotinate degradation pathway. Is also active on the non-natural substrate 5-chloro-6-hydroxynicotinate, and is much less efficient on the substrate analog 4-hydroxybenzoate. The sequence is that of 6-hydroxynicotinate 3-monooxygenase from Bordetella bronchiseptica (strain ATCC BAA-588 / NCTC 13252 / RB50) (Alcaligenes bronchisepticus).